A 209-amino-acid chain; its full sequence is Uracil phosphoribosyltransferase (209 aa).

5-phospho-alpha-D-ribose 1-diphosphate-binding positions include arginine 79, arginine 104, and 131–139 (DPMLATGVS). Uracil contacts are provided by residues isoleucine 194 and 199–201 (GDA). Residue aspartate 200 coordinates 5-phospho-alpha-D-ribose 1-diphosphate.

This sequence belongs to the UPRTase family. Requires Mg(2+) as cofactor.

The enzyme catalyses UMP + diphosphate = 5-phospho-alpha-D-ribose 1-diphosphate + uracil. It functions in the pathway pyrimidine metabolism; UMP biosynthesis via salvage pathway; UMP from uracil: step 1/1. Allosterically activated by GTP. Functionally, catalyzes the conversion of uracil and 5-phospho-alpha-D-ribose 1-diphosphate (PRPP) to UMP and diphosphate. This Thermotoga neapolitana (strain ATCC 49049 / DSM 4359 / NBRC 107923 / NS-E) protein is Uracil phosphoribosyltransferase.